Consider the following 338-residue polypeptide: Oxygen-dependent coproporphyrinogen-III oxidase (338 aa).

A substrate-binding site is contributed by serine 104. A divalent metal cation-binding residues include histidine 108 and histidine 118. Histidine 118 serves as the catalytic Proton donor. Residue 120–122 coordinates substrate; it reads NYR. Residues histidine 152 and histidine 182 each coordinate a divalent metal cation. An important for dimerization region spans residues 274 to 309; sequence YVEFNLVYDRGTIFGLQTNGRTESILMSLPPLVRWE.

Belongs to the aerobic coproporphyrinogen-III oxidase family. Homodimer. A divalent metal cation is required as a cofactor.

It localises to the cytoplasm. The catalysed reaction is coproporphyrinogen III + O2 + 2 H(+) = protoporphyrinogen IX + 2 CO2 + 2 H2O. Its pathway is porphyrin-containing compound metabolism; protoporphyrin-IX biosynthesis; protoporphyrinogen-IX from coproporphyrinogen-III (O2 route): step 1/1. Its function is as follows. Involved in the heme and chlorophyll biosynthesis. Catalyzes the aerobic oxidative decarboxylation of propionate groups of rings A and B of coproporphyrinogen-III to yield the vinyl groups in protoporphyrinogen-IX. The protein is Oxygen-dependent coproporphyrinogen-III oxidase of Thermosynechococcus vestitus (strain NIES-2133 / IAM M-273 / BP-1).